Reading from the N-terminus, the 318-residue chain is NADH-ubiquinone oxidoreductase chain 1 (318 aa).

A run of 8 helical transmembrane segments spans residues methionine 1–leucine 21, leucine 71–proline 91, leucine 101–glycine 121, valine 145–leucine 165, histidine 172–alanine 192, phenylalanine 224–isoleucine 244, glutamate 253–isoleucine 273, and leucine 294–isoleucine 314.

This sequence belongs to the complex I subunit 1 family.

It localises to the mitochondrion inner membrane. The catalysed reaction is a ubiquinone + NADH + 5 H(+)(in) = a ubiquinol + NAD(+) + 4 H(+)(out). Its function is as follows. Core subunit of the mitochondrial membrane respiratory chain NADH dehydrogenase (Complex I) that is believed to belong to the minimal assembly required for catalysis. Complex I functions in the transfer of electrons from NADH to the respiratory chain. The immediate electron acceptor for the enzyme is believed to be ubiquinone. In Varanus rudicollis (Rough-necked monitor lizard), this protein is NADH-ubiquinone oxidoreductase chain 1 (MT-ND1).